The primary structure comprises 216 residues: uncharacterized protein (216 aa).

2 4Fe-4S ferredoxin-type domains span residues 160-189 (DDKP…IDEK) and 188-216 (EKPK…ALLP). Cys169, Cys172, Cys175, Cys179, Cys197, Cys200, Cys203, and Cys207 together coordinate [4Fe-4S] cluster.

The protein belongs to the FrhG family.

This is an uncharacterized protein from Methanocaldococcus jannaschii (strain ATCC 43067 / DSM 2661 / JAL-1 / JCM 10045 / NBRC 100440) (Methanococcus jannaschii).